The primary structure comprises 626 residues: Biosynthetic arginine decarboxylase (626 aa).

Lysine 99 bears the N6-(pyridoxal phosphate)lysine mark. 279–289 contributes to the substrate binding site; sequence VDVGGGLGVDY.

This sequence belongs to the Orn/Lys/Arg decarboxylase class-II family. SpeA subfamily. It depends on Mg(2+) as a cofactor. Pyridoxal 5'-phosphate is required as a cofactor.

It carries out the reaction L-arginine + H(+) = agmatine + CO2. It functions in the pathway amine and polyamine biosynthesis; agmatine biosynthesis; agmatine from L-arginine: step 1/1. Catalyzes the biosynthesis of agmatine from arginine. This chain is Biosynthetic arginine decarboxylase, found in Chromobacterium violaceum (strain ATCC 12472 / DSM 30191 / JCM 1249 / CCUG 213 / NBRC 12614 / NCIMB 9131 / NCTC 9757 / MK).